The sequence spans 452 residues: BUB3-interacting and GLEBS motif-containing protein ZNF207 (452 aa).

Positions methionine 1–glutamate 92 are microtubule-binding region. C2H2-type zinc fingers lie at residues proline 11–histidine 34 and phenylalanine 35–histidine 58. 2 disordered regions span residues glutamine 99–glutamine 131 and serine 298–threonine 330. Over residues aspartate 113–threonine 123 the composition is skewed to acidic residues. Positions alanine 329 to glutamine 361 are GLEBS.

As to quaternary structure, interacts (via GLEBS region) with bub3.

The protein resides in the nucleus. It localises to the chromosome. It is found in the centromere. The protein localises to the kinetochore. Its subcellular location is the cytoplasm. The protein resides in the cytoskeleton. It localises to the spindle. Its function is as follows. Kinetochore- and microtubule-binding protein that plays a key role in spindle assembly. Znf207/BuGZ is mainly composed of disordered low-complexity regions and undergoes phase transition or coacervation to form temperature-dependent liquid droplets. Coacervation promotes microtubule bundling and concentrates tubulin, promoting microtubule polymerization and assembly of spindle and spindle matrix by concentrating its building blocks. The chain is BUB3-interacting and GLEBS motif-containing protein ZNF207 from Xenopus laevis (African clawed frog).